Reading from the N-terminus, the 352-residue chain is Maleylacetate reductase (352 aa).

Belongs to the iron-containing alcohol dehydrogenase family.

The catalysed reaction is 3-oxoadipate + NAD(+) = maleylacetate + NADH + H(+). The enzyme catalyses 3-oxoadipate + NADP(+) = maleylacetate + NADPH + H(+). It participates in xenobiotic degradation; (2,4,5-trichlorophenoxy)acetate degradation. This is Maleylacetate reductase (tftE) from Burkholderia cepacia (Pseudomonas cepacia).